A 543-amino-acid chain; its full sequence is EH domain-containing protein 2 (543 aa).

A phosphoserine mark is found at serine 3 and serine 44. The Dynamin-type G domain occupies 55–286 (FDGKPMVLVA…DLFRDIQGLP (232 aa)). The segment at 65–72 (GQYSTGKT) is G1 motif. 65–72 (GQYSTGKT) is a binding site for ATP. Residues 91–92 (EP) are G2 motif. Residues 153–156 (DTPG) form a G3 motif region. Residues 219–222 (NKAD) form a G4 motif region. Lysine 220 contributes to the ATP binding site. A region of interest (G5 motif) is located at residue valine 243. Tryptophan 258 contacts ATP. The tract at residues 320-340 (SVFGKENKKKQLIFKLPVIFA) is mediates membrane-binding. Phosphoserine occurs at positions 438, 468, 470, 484, and 493. The EH domain occupies 449 to 537 (DKSKYDEIFY…RRLVPPSKRR (89 aa)). The EF-hand domain maps to 481-516 (LPNSVLGRIWKLSDVDRDGMLDDEEFALASHLIEAK). The Ca(2+) site is built by aspartate 494, aspartate 496, aspartate 498, methionine 500, and glutamate 505. The segment at 521–543 (GLPTNLPRRLVPPSKRRQKGSAE) is disordered. Over residues 534–543 (SKRRQKGSAE) the composition is skewed to basic residues.

The protein belongs to the TRAFAC class dynamin-like GTPase superfamily. Dynamin/Fzo/YdjA family. EHD subfamily. Homodimer and homooligomer. Interacts with EHD1. May also interact with EHD3 and EHD4. Interacts with MYOF. Interacts with EHBP1. Interacts with FER1L5 (via second C2 domain). Interacts with CAV1 in a cholesterol-dependent manner. Interacts (via EH domain) with PACSIN2 (via NPF motifs); this interaction probably stabilizes the caveolae.

Its subcellular location is the cell membrane. The protein localises to the membrane. It is found in the caveola. It localises to the endosome membrane. The protein resides in the cytoplasm. Its subcellular location is the cytosol. The very low intrinsic ATPase activity is increased upon interaction with liposomes. ATP- and membrane-binding protein that controls membrane reorganization/tubulation upon ATP hydrolysis. Plays a role in membrane trafficking between the plasma membrane and endosomes. Important for the internalization of GLUT4. Required for fusion of myoblasts to skeletal muscle myotubes. Required for normal translocation of FER1L5 to the plasma membrane. Regulates the equilibrium between cell surface-associated and cell surface-dissociated caveolae by constraining caveolae at the cell membrane. The polypeptide is EH domain-containing protein 2 (Rattus norvegicus (Rat)).